The following is a 388-amino-acid chain: S-adenosylmethionine synthase (388 aa).

Residue histidine 14 participates in ATP binding. Mg(2+) is bound at residue aspartate 16. Glutamate 42 is a K(+) binding site. L-methionine is bound by residues glutamate 55 and glutamine 98. The interval 98-108 (QSAEISSAVDQ) is flexible loop. Residues 166–168 (DGK), aspartate 242, 248–249 (RK), alanine 265, and lysine 269 each bind ATP. An L-methionine-binding site is contributed by aspartate 242. Lysine 273 is an L-methionine binding site.

Belongs to the AdoMet synthase family. Homotetramer; dimer of dimers. The cofactor is Mg(2+). It depends on K(+) as a cofactor.

The protein resides in the cytoplasm. It catalyses the reaction L-methionine + ATP + H2O = S-adenosyl-L-methionine + phosphate + diphosphate. It participates in amino-acid biosynthesis; S-adenosyl-L-methionine biosynthesis; S-adenosyl-L-methionine from L-methionine: step 1/1. In terms of biological role, catalyzes the formation of S-adenosylmethionine (AdoMet) from methionine and ATP. The overall synthetic reaction is composed of two sequential steps, AdoMet formation and the subsequent tripolyphosphate hydrolysis which occurs prior to release of AdoMet from the enzyme. This Oenococcus oeni (strain ATCC BAA-331 / PSU-1) protein is S-adenosylmethionine synthase.